Reading from the N-terminus, the 187-residue chain is Protein GrpE (187 aa).

The segment at 1–26 is disordered; that stretch reads MNDLKNAENGPDEADTPQGAPSQEPD.

It belongs to the GrpE family. Homodimer.

The protein resides in the cytoplasm. Its function is as follows. Participates actively in the response to hyperosmotic and heat shock by preventing the aggregation of stress-denatured proteins, in association with DnaK and GrpE. It is the nucleotide exchange factor for DnaK and may function as a thermosensor. Unfolded proteins bind initially to DnaJ; upon interaction with the DnaJ-bound protein, DnaK hydrolyzes its bound ATP, resulting in the formation of a stable complex. GrpE releases ADP from DnaK; ATP binding to DnaK triggers the release of the substrate protein, thus completing the reaction cycle. Several rounds of ATP-dependent interactions between DnaJ, DnaK and GrpE are required for fully efficient folding. This Methylocella silvestris (strain DSM 15510 / CIP 108128 / LMG 27833 / NCIMB 13906 / BL2) protein is Protein GrpE.